A 223-amino-acid chain; its full sequence is Thiamine-phosphate synthase (223 aa).

Residues 42–46 and Asn-83 each bind 4-amino-2-methyl-5-(diphosphooxymethyl)pyrimidine; that span reads QLRDK. The Mg(2+) site is built by Asp-84 and Asp-103. Ser-122 is a binding site for 4-amino-2-methyl-5-(diphosphooxymethyl)pyrimidine. 148–150 is a binding site for 2-[(2R,5Z)-2-carboxy-4-methylthiazol-5(2H)-ylidene]ethyl phosphate; it reads TPT. Lys-151 serves as a coordination point for 4-amino-2-methyl-5-(diphosphooxymethyl)pyrimidine. A 2-[(2R,5Z)-2-carboxy-4-methylthiazol-5(2H)-ylidene]ethyl phosphate-binding site is contributed by Gly-179.

This sequence belongs to the thiamine-phosphate synthase family. The cofactor is Mg(2+).

It carries out the reaction 2-[(2R,5Z)-2-carboxy-4-methylthiazol-5(2H)-ylidene]ethyl phosphate + 4-amino-2-methyl-5-(diphosphooxymethyl)pyrimidine + 2 H(+) = thiamine phosphate + CO2 + diphosphate. The enzyme catalyses 2-(2-carboxy-4-methylthiazol-5-yl)ethyl phosphate + 4-amino-2-methyl-5-(diphosphooxymethyl)pyrimidine + 2 H(+) = thiamine phosphate + CO2 + diphosphate. The catalysed reaction is 4-methyl-5-(2-phosphooxyethyl)-thiazole + 4-amino-2-methyl-5-(diphosphooxymethyl)pyrimidine + H(+) = thiamine phosphate + diphosphate. It participates in cofactor biosynthesis; thiamine diphosphate biosynthesis; thiamine phosphate from 4-amino-2-methyl-5-diphosphomethylpyrimidine and 4-methyl-5-(2-phosphoethyl)-thiazole: step 1/1. Condenses 4-methyl-5-(beta-hydroxyethyl)thiazole monophosphate (THZ-P) and 2-methyl-4-amino-5-hydroxymethyl pyrimidine pyrophosphate (HMP-PP) to form thiamine monophosphate (TMP). The chain is Thiamine-phosphate synthase from Mycobacterium avium (strain 104).